We begin with the raw amino-acid sequence, 147 residues long: Nucleoside diphosphate kinase (147 aa).

ATP contacts are provided by lysine 9, phenylalanine 57, arginine 85, threonine 91, arginine 102, and asparagine 112. The active-site Pros-phosphohistidine intermediate is histidine 115.

This sequence belongs to the NDK family. Mg(2+) serves as cofactor.

It localises to the cytoplasm. It catalyses the reaction a 2'-deoxyribonucleoside 5'-diphosphate + ATP = a 2'-deoxyribonucleoside 5'-triphosphate + ADP. The catalysed reaction is a ribonucleoside 5'-diphosphate + ATP = a ribonucleoside 5'-triphosphate + ADP. In terms of biological role, major role in the synthesis of nucleoside triphosphates other than ATP. The ATP gamma phosphate is transferred to the NDP beta phosphate via a ping-pong mechanism, using a phosphorylated active-site intermediate. The protein is Nucleoside diphosphate kinase of Thermoplasma volcanium (strain ATCC 51530 / DSM 4299 / JCM 9571 / NBRC 15438 / GSS1).